We begin with the raw amino-acid sequence, 1418 residues long: Protein ced-11 (1418 aa).

7 helical membrane-spanning segments follow: residues 617–637 (FPIF…IIPV), 755–775 (YWLS…SVVL), 782–802 (LWDT…CFVL), 818–838 (VFDV…KVFP), 856–876 (VVSA…YIPL), 898–918 (FLFM…AVVF), and 986–1006 (IVIE…FAFF).

Its subcellular location is the membrane. Its function is as follows. Plays a major role in programmed cell death. The protein is Protein ced-11 (ced-11) of Caenorhabditis elegans.